We begin with the raw amino-acid sequence, 78 residues long: Small ribosomal subunit protein bS16c (78 aa).

The protein belongs to the bacterial ribosomal protein bS16 family.

It localises to the plastid. Its subcellular location is the chloroplast. The polypeptide is Small ribosomal subunit protein bS16c (Phaeodactylum tricornutum (strain CCAP 1055/1)).